We begin with the raw amino-acid sequence, 890 residues long: DNA mismatch repair protein MutS (890 aa).

Residue 645 to 652 participates in ATP binding; sequence GPNMAGKS.

This sequence belongs to the DNA mismatch repair MutS family.

This protein is involved in the repair of mismatches in DNA. It is possible that it carries out the mismatch recognition step. This protein has a weak ATPase activity. In Rickettsia rickettsii (strain Iowa), this protein is DNA mismatch repair protein MutS.